Here is a 134-residue protein sequence, read N- to C-terminus: Small ribosomal subunit protein bS6 (134 aa).

A disordered region spans residues E99–G134. Residues Q105 to G134 show a composition bias toward basic and acidic residues.

Belongs to the bacterial ribosomal protein bS6 family.

In terms of biological role, binds together with bS18 to 16S ribosomal RNA. This is Small ribosomal subunit protein bS6 from Methylobacterium sp. (strain 4-46).